The following is a 551-amino-acid chain: MRAFFLPFIQDALQKAGIETDKEIQIDKPNDKKFGDFSTNIAFLVAKEARKNPRELAGQLIGLLDFPEGTVTKTEVAGPGFINFHLAPAFFMRSAQEVLAKGEGFGCNESGKGLKAIVEYVSANPTGPLTIGRGRGGVLGDCIANLLETQGYEVTREYYFNDAGRQMQILAESVRYRYLEKCGQVIEFPETHYQGDYIGEIAETLFIEHGDGLAATDELTIFKEAAEAVIFSSIRKTLERLLITHDSFFNEHTLYQSREGQPSANQRVIDALDAKGFIGNYDGATWFMTTKLGQEKDKVLIKSSGDPSYRLPDIAYHVTKFERGFDLMVNVFGADHIDEYPDVLEALKILGYDTSKVKIAINQFVTTTVGGQTVKMSTRKGNADLLDDLIDDVGADATRLFFIMRGKDSHLNFDVELAKKQSKDNPVFYLQYAHARICSLVRMAEKEVGFDEATAIGAGLPLLSSEPEIDLASALLDFPDIIQSSLRQLEPQKMVEYLHTVAERYHKFYQECPILKADEHLRTARLELSLAVRQVLRNGFKILGISAPESM.

The short motif at 123-133 (ANPTGPLTIGR) is the 'HIGH' region element.

The protein belongs to the class-I aminoacyl-tRNA synthetase family. In terms of assembly, monomer.

Its subcellular location is the cytoplasm. The catalysed reaction is tRNA(Arg) + L-arginine + ATP = L-arginyl-tRNA(Arg) + AMP + diphosphate. This chain is Arginine--tRNA ligase, found in Chlorobaculum tepidum (strain ATCC 49652 / DSM 12025 / NBRC 103806 / TLS) (Chlorobium tepidum).